Here is a 282-residue protein sequence, read N- to C-terminus: Probable ribosomal RNA small subunit methyltransferase A (282 aa).

Residues H24, L26, G51, E72, D100, and N115 each coordinate S-adenosyl-L-methionine.

The protein belongs to the class I-like SAM-binding methyltransferase superfamily. rRNA adenine N(6)-methyltransferase family. RsmA subfamily.

The protein resides in the cytoplasm. Its function is as follows. Specifically dimethylates two adjacent adenosines in the loop of a conserved hairpin near the 3'-end of 16S rRNA in the 30S particle. May play a critical role in biogenesis of 30S subunits. This is Probable ribosomal RNA small subunit methyltransferase A from Halobacterium salinarum (strain ATCC 29341 / DSM 671 / R1).